The chain runs to 153 residues: Deoxyuridine 5'-triphosphate nucleotidohydrolase (153 aa).

8 residues coordinate dUMP: serine 75, glycine 88, aspartate 91, tyrosine 94, lysine 99, arginine 143, phenylalanine 148, and glycine 149.

It belongs to the dUTPase family. Homotrimer. Mg(2+) serves as cofactor.

The catalysed reaction is dUTP + H2O = dUMP + diphosphate + H(+). Its pathway is pyrimidine metabolism; dUMP biosynthesis; dUMP from dCTP (dUTP route): step 2/2. In terms of biological role, involved in nucleotide metabolism via production of dUMP, the immediate precursor of thymidine nucleotides, and decreases the intracellular concentration of dUTP so that uracil cannot be incorporated into DNA. The chain is Deoxyuridine 5'-triphosphate nucleotidohydrolase (DUT1) from Eremothecium gossypii (strain ATCC 10895 / CBS 109.51 / FGSC 9923 / NRRL Y-1056) (Yeast).